A 505-amino-acid polypeptide reads, in one-letter code: 2,3-bisphosphoglycerate-independent phosphoglycerate mutase (505 aa).

Mn(2+)-binding residues include D13 and S63. The active-site Phosphoserine intermediate is the S63. Substrate is bound by residues H124, 153 to 154 (RD), R183, R189, 254 to 257 (RADR), and K330. Residues D396, H400, D437, H438, and H456 each contribute to the Mn(2+) site.

This sequence belongs to the BPG-independent phosphoglycerate mutase family. Monomer. The cofactor is Mn(2+).

It catalyses the reaction (2R)-2-phosphoglycerate = (2R)-3-phosphoglycerate. It functions in the pathway carbohydrate degradation; glycolysis; pyruvate from D-glyceraldehyde 3-phosphate: step 3/5. Catalyzes the interconversion of 2-phosphoglycerate and 3-phosphoglycerate. This chain is 2,3-bisphosphoglycerate-independent phosphoglycerate mutase, found in Roseobacter denitrificans (strain ATCC 33942 / OCh 114) (Erythrobacter sp. (strain OCh 114)).